The primary structure comprises 183 residues: Ribosome-recycling factor (183 aa).

The protein belongs to the RRF family.

It is found in the cytoplasm. In terms of biological role, responsible for the release of ribosomes from messenger RNA at the termination of protein biosynthesis. May increase the efficiency of translation by recycling ribosomes from one round of translation to another. The protein is Ribosome-recycling factor of Mycoplasmoides gallisepticum (strain R(low / passage 15 / clone 2)) (Mycoplasma gallisepticum).